We begin with the raw amino-acid sequence, 254 residues long: Gamma-glutamyl-gamma-aminobutyrate hydrolase (254 aa).

The Glutamine amidotransferase type-1 domain occupies 16 to 250 (RNRLKGHATQ…ITACQHHIAE (235 aa)). Catalysis depends on C114, which acts as the Nucleophile. Active-site residues include H222 and E224.

The protein belongs to the peptidase C26 family.

It carries out the reaction 4-(gamma-L-glutamylamino)butanoate + H2O = 4-aminobutanoate + L-glutamate. The protein operates within amine and polyamine degradation; putrescine degradation; 4-aminobutanoate from putrescine: step 4/4. Its function is as follows. Involved in the breakdown of putrescine via hydrolysis of the gamma-glutamyl linkage of gamma-glutamyl-gamma-aminobutyrate. The chain is Gamma-glutamyl-gamma-aminobutyrate hydrolase (puuD) from Escherichia coli O157:H7.